The primary structure comprises 157 residues: Protein Smg homolog (157 aa).

It belongs to the Smg family.

This Photobacterium profundum (strain SS9) protein is Protein Smg homolog.